We begin with the raw amino-acid sequence, 350 residues long: E3 ubiquitin-protein ligase TRIM63 (350 aa).

The segment at 23 to 79 (CPICLEMFTKPVVILPCQHNLCRKCANDIFQAANPYWTNRGGSVSMSGGRFRCPSCR) adopts an RING-type zinc-finger fold. Positions 74–218 (RCPSCRHEVI…LSQKFDTLYA (145 aa)) are interaction with TTN. A B box-type zinc finger spans residues 117–159 (GSHPMCKEHEDEKINIYCLTCEVPTCSLCKVFGAHQACEVAPL). The Zn(2+) site is built by Cys122, His125, Cys145, and His151. The stretch at 207 to 269 (EELSQKFDTL…VETAIQSLDE (63 aa)) forms a coiled coil. The 59-residue stretch at 267-325 (LDEPGGATFLSSAKQLIKSNVEASKGCQLGKTEQGFENMDYFTLDLEHIAEALRAIDFG) folds into the COS domain. Positions 325–344 (GTDEEEEEFTEEEADEEEGV) are enriched in acidic residues. The segment at 325–350 (GTDEEEEEFTEEEADEEEGVTTEGHQ) is disordered.

Homodimer. Homooligomer and heterooligomer. Interacts with SUMO2, titin/TTN and GMEB1. Interacts with TRIM54 and probably with TRIM55. Interacts with TNNI3. Forms a ternary complex with RACK1 and PRKCE. Interacts with CKM.

The protein localises to the cytoplasm. Its subcellular location is the nucleus. It is found in the myofibril. It localises to the sarcomere. The protein resides in the m line. The protein localises to the z line. The enzyme catalyses S-ubiquitinyl-[E2 ubiquitin-conjugating enzyme]-L-cysteine + [acceptor protein]-L-lysine = [E2 ubiquitin-conjugating enzyme]-L-cysteine + N(6)-ubiquitinyl-[acceptor protein]-L-lysine.. The protein operates within protein modification; protein ubiquitination. In terms of biological role, E3 ubiquitin ligase. Mediates the ubiquitination and subsequent proteasomal degradation of CKM, GMEB1 and HIBADH. Regulates the proteasomal degradation of muscle proteins under amino acid starvation, where muscle protein is catabolized to provide other organs with amino acids. Inhibits de novo skeletal muscle protein synthesis under amino acid starvation. Regulates proteasomal degradation of cardiac troponin I/TNNI3 and probably of other sarcomeric-associated proteins. May play a role in striated muscle atrophy and hypertrophy by regulating an anti-hypertrophic PKC-mediated signaling pathway. May regulate the organization of myofibrils through TTN in muscle cells. The chain is E3 ubiquitin-protein ligase TRIM63 (Trim63) from Mus musculus (Mouse).